We begin with the raw amino-acid sequence, 327 residues long: Transaldolase (327 aa).

The active-site Schiff-base intermediate with substrate is K132.

Belongs to the transaldolase family. Type 1 subfamily.

Its subcellular location is the cytoplasm. It carries out the reaction D-sedoheptulose 7-phosphate + D-glyceraldehyde 3-phosphate = D-erythrose 4-phosphate + beta-D-fructose 6-phosphate. Its pathway is carbohydrate degradation; pentose phosphate pathway; D-glyceraldehyde 3-phosphate and beta-D-fructose 6-phosphate from D-ribose 5-phosphate and D-xylulose 5-phosphate (non-oxidative stage): step 2/3. In terms of biological role, transaldolase is important for the balance of metabolites in the pentose-phosphate pathway. The sequence is that of Transaldolase from Chlamydia muridarum (strain MoPn / Nigg).